The primary structure comprises 414 residues: Histidine--tRNA ligase (414 aa).

It belongs to the class-II aminoacyl-tRNA synthetase family. Homodimer.

The protein resides in the cytoplasm. The catalysed reaction is tRNA(His) + L-histidine + ATP = L-histidyl-tRNA(His) + AMP + diphosphate + H(+). The polypeptide is Histidine--tRNA ligase (Solibacter usitatus (strain Ellin6076)).